A 329-amino-acid chain; its full sequence is Biotin synthase (329 aa).

The region spanning 46–275 (YYGNKVKLNM…TKEIRISGGR (230 aa)) is the Radical SAM core domain. Cys-64, Cys-68, and Cys-71 together coordinate [4Fe-4S] cluster. [2Fe-2S] cluster-binding residues include Cys-108, Cys-140, Cys-200, and Arg-270.

The protein belongs to the radical SAM superfamily. Biotin synthase family. In terms of assembly, homodimer. [4Fe-4S] cluster is required as a cofactor. Requires [2Fe-2S] cluster as cofactor.

It carries out the reaction (4R,5S)-dethiobiotin + (sulfur carrier)-SH + 2 reduced [2Fe-2S]-[ferredoxin] + 2 S-adenosyl-L-methionine = (sulfur carrier)-H + biotin + 2 5'-deoxyadenosine + 2 L-methionine + 2 oxidized [2Fe-2S]-[ferredoxin]. It participates in cofactor biosynthesis; biotin biosynthesis; biotin from 7,8-diaminononanoate: step 2/2. Its function is as follows. Catalyzes the conversion of dethiobiotin (DTB) to biotin by the insertion of a sulfur atom into dethiobiotin via a radical-based mechanism. The polypeptide is Biotin synthase (Anoxybacillus flavithermus (strain DSM 21510 / WK1)).